Here is a 359-residue protein sequence, read N- to C-terminus: ATP-dependent 6-phosphofructokinase 1 (359 aa).

ATP is bound by residues glycine 14, 78-79 (KG), and 115-118 (GDGS). A Mg(2+)-binding site is contributed by aspartate 116. Residues 139–141 (TID), arginine 176, 183–185 (MGR), glutamate 236, arginine 277, and 283–286 (HIQR) contribute to the substrate site. Aspartate 141 functions as the Proton acceptor in the catalytic mechanism.

It belongs to the phosphofructokinase type A (PFKA) family. Mixed-substrate PFK group III subfamily. In terms of assembly, homodimer or homotetramer. Requires Mg(2+) as cofactor.

The protein resides in the cytoplasm. The catalysed reaction is beta-D-fructose 6-phosphate + ATP = beta-D-fructose 1,6-bisphosphate + ADP + H(+). It participates in carbohydrate degradation; glycolysis; D-glyceraldehyde 3-phosphate and glycerone phosphate from D-glucose: step 3/4. Functionally, catalyzes the phosphorylation of D-fructose 6-phosphate to fructose 1,6-bisphosphate by ATP, the first committing step of glycolysis. In Nostoc sp. (strain PCC 7120 / SAG 25.82 / UTEX 2576), this protein is ATP-dependent 6-phosphofructokinase 1.